The sequence spans 229 residues: Biosynthetic peptidoglycan transglycosylase (229 aa).

Residues 14-34 (FITWRFLLVVVLLLLVLLLVL) traverse the membrane as a helical segment.

It belongs to the glycosyltransferase 51 family.

Its subcellular location is the cell inner membrane. It catalyses the reaction [GlcNAc-(1-&gt;4)-Mur2Ac(oyl-L-Ala-gamma-D-Glu-L-Lys-D-Ala-D-Ala)](n)-di-trans,octa-cis-undecaprenyl diphosphate + beta-D-GlcNAc-(1-&gt;4)-Mur2Ac(oyl-L-Ala-gamma-D-Glu-L-Lys-D-Ala-D-Ala)-di-trans,octa-cis-undecaprenyl diphosphate = [GlcNAc-(1-&gt;4)-Mur2Ac(oyl-L-Ala-gamma-D-Glu-L-Lys-D-Ala-D-Ala)](n+1)-di-trans,octa-cis-undecaprenyl diphosphate + di-trans,octa-cis-undecaprenyl diphosphate + H(+). The protein operates within cell wall biogenesis; peptidoglycan biosynthesis. Its function is as follows. Peptidoglycan polymerase that catalyzes glycan chain elongation from lipid-linked precursors. The protein is Biosynthetic peptidoglycan transglycosylase of Shewanella denitrificans (strain OS217 / ATCC BAA-1090 / DSM 15013).